The chain runs to 508 residues: Probable monogalactosyldiacylglycerol synthase 3, chloroplastic (508 aa).

The N-terminal 60 residues, 1–60, are a transit peptide targeting the chloroplast; sequence MAASSSSSSSMASPRGRSIRETVLETVAAYHQQQRMRRKFRKSLSYAGELSSAGRARGEG. A disordered region spans residues 51-79; that stretch reads SSAGRARGEGGASSSASTTSLCGPDEDDE.

Belongs to the glycosyltransferase 28 family.

It is found in the plastid. The protein localises to the chloroplast membrane. The catalysed reaction is a 1,2-diacyl-sn-glycerol + UDP-alpha-D-galactose = a 1,2-diacyl-3-O-(beta-D-galactosyl)-sn-glycerol + UDP + H(+). Its function is as follows. Involved in the synthesis of the major structural component of photosynthetic membranes. This chain is Probable monogalactosyldiacylglycerol synthase 3, chloroplastic (MGD3), found in Oryza sativa subsp. japonica (Rice).